A 180-amino-acid polypeptide reads, in one-letter code: Large ribosomal subunit protein uL6 (180 aa).

Belongs to the universal ribosomal protein uL6 family. In terms of assembly, part of the 50S ribosomal subunit.

This protein binds to the 23S rRNA, and is important in its secondary structure. It is located near the subunit interface in the base of the L7/L12 stalk, and near the tRNA binding site of the peptidyltransferase center. This is Large ribosomal subunit protein uL6 from Flavobacterium johnsoniae (strain ATCC 17061 / DSM 2064 / JCM 8514 / BCRC 14874 / CCUG 350202 / NBRC 14942 / NCIMB 11054 / UW101) (Cytophaga johnsonae).